The primary structure comprises 586 residues: CTP synthase 2 (586 aa).

Positions 300–554 (SIALVGKYTK…LAATGTLNTH (255 aa)) constitute a Glutamine amidotransferase type-1 domain. Residues Cys-399, His-526, and Glu-528 each act as for GATase activity in the active site. Phosphoserine is present on residues Ser-568, Ser-571, and Ser-574.

This sequence belongs to the CTP synthase family.

It catalyses the reaction UTP + L-glutamine + ATP + H2O = CTP + L-glutamate + ADP + phosphate + 2 H(+). It participates in pyrimidine metabolism; CTP biosynthesis via de novo pathway; CTP from UDP: step 2/2. Its function is as follows. Catalyzes the ATP-dependent amination of UTP to CTP with either L-glutamine or ammonia as the source of nitrogen. Constitutes the rate-limiting enzyme in the synthesis of cytosine nucleotides. The polypeptide is CTP synthase 2 (Ctps2) (Rattus norvegicus (Rat)).